The chain runs to 522 residues: Insulinoma-associated protein 1 (522 aa).

Positions 1–12 are enriched in basic residues; that stretch reads MPRGFLVKRSKK. The segment at 1-20 is SNAG domain; it reads MPRGFLVKRSKKSTPVSYRI. 2 disordered regions span residues 1 to 112 and 182 to 235; these read MPRG…SREH and AAEA…KPKA. A required and sufficient for interaction with KDM1A region spans residues 2–7; that stretch reads PRGFLV. The tract at residues 43-57 is necessary for interaction with CCND1; the sequence is PPAPGPGPVPGPLQP. Residues 43 to 61 are compositionally biased toward pro residues; the sequence is PPAPGPGPVPGPLQPPPPT. Low complexity-rich tracts occupy residues 66 to 75 and 212 to 228; these read AALAAALACA and ASAA…AKAP. Residues 277–297 form a C2H2-type 1; atypical zinc finger; the sequence is FICQLCKEEYADPFALAQHKC. The C2H2-type 2 zinc finger occupies 305–327; sequence YRCPECAKVFSCPANLASHRRWH. The segment at 325–373 is disordered; the sequence is RWHKPRPAPAAARACEPETPARAEAREATGGGGSDRDTPSPGGVSESGS. The span at 339–351 shows a compositional bias: basic and acidic residues; sequence CEPETPARAEARE. 3 consecutive C2H2-type zinc fingers follow at residues 378-400, 453-476, and 481-504; these read YECH…LLAH, HLCP…RLLH, and FPCK…NKCH.

Belongs to the INSM1 family. In terms of assembly, interacts (via the N-terminal region) with CCND1 (via cyclin N-terminal domain); the interaction competes with the binding of CCND1 to CDK4 during cell cycle progression and increases its transcriptional repressor activity. Interacts with HDAC3; the interaction increases its transcriptional repressor activity. Interacts (via the SNAG domain) with HDAC1. Interacts (via the SNAG domain) with HDAC2. Interacts (via the SNAG domain) with KDM1A. Interacts (via the SNAG domain) with RCOR1. Interacts with SORBS1.

The protein localises to the nucleus. Functionally, sequence-specific DNA-binding transcriptional regulator that plays a key role in neurogenesis and neuroendocrine cell differentiation during embryonic and/or fetal development. Binds to the consensus sequence 5'-[TG][TC][TC][TT][GA]GGG[CG]A-3' in target promoters. Acts as a transcriptional repressor of NEUROD1 and INS expression via its interaction with cyclin CCND1 in a cell cycle-independent manner. Negatively regulates skeletal muscle-specific gene expression in endocrine cells of the pituitary by inhibiting the Notch signaling pathway. Represses target gene transcription by recruiting chromatin-modifying factors, such as HDAC1, HDAC2, HDAC3, KDM1A and RCOR1 histone deacetylases. Binds to its own promoter, suggesting autoregulation as a self-control feedback mechanism. Competes with histone H3 for the same binding site on the histone demethylase complex formed by KDM1A and RCOR1, and thereby inhibits demethylation of histone H3 at 'Lys-4'. Promotes the generation and expansion of neuronal basal progenitor cells in the developing neocortex. Involved in the differentiation of endocrine cells of the developing anterior pituitary gland, of the pancreas and intestine, and of sympatho-adrenal cells in the peripheral nervous system. Promotes cell cycle signaling arrest and inhibition of cellular proliferation. In Bos taurus (Bovine), this protein is Insulinoma-associated protein 1 (INSM1).